An 838-amino-acid polypeptide reads, in one-letter code: Protein P (838 aa).

Positions 1 to 179 (MPLSYQHFRK…FCGSPYSWEQ (179 aa)) are terminal protein domain (TP). The tract at residues 180-341 (ELQHSQRHGD…YCLSHLVNLR (162 aa)) is spacer. The interval 219–245 (GLQPHQGPLASSQPGRSGSIRARAHPS) is disordered. The segment at 342–685 (EDWGPCDDHG…YMNLYPVARQ (344 aa)) is polymerase/reverse transcriptase domain (RT). A Reverse transcriptase domain is found at 352 to 595 (EHHIRIPRTP…YSLNFMGYII (244 aa)). Asp424, Asp546, and Asp547 together coordinate Mg(2+).

Belongs to the hepadnaviridae P protein family.

It catalyses the reaction DNA(n) + a 2'-deoxyribonucleoside 5'-triphosphate = DNA(n+1) + diphosphate. The catalysed reaction is Endonucleolytic cleavage to 5'-phosphomonoester.. Its activity is regulated as follows. Activated by host HSP70 and HSP40 in vitro to be able to bind the epsilon loop of the pgRNA. Because deletion of the RNase H region renders the protein partly chaperone-independent, the chaperones may be needed indirectly to relieve occlusion of the RNA-binding site by this domain. Inhibited by several reverse-transcriptase inhibitors: Lamivudine, Adefovir and Entecavir. Its function is as follows. Multifunctional enzyme that converts the viral RNA genome into dsDNA in viral cytoplasmic capsids. This enzyme displays a DNA polymerase activity that can copy either DNA or RNA templates, and a ribonuclease H (RNase H) activity that cleaves the RNA strand of RNA-DNA heteroduplexes in a partially processive 3'- to 5'-endonucleasic mode. Neo-synthesized pregenomic RNA (pgRNA) are encapsidated together with the P protein, and reverse-transcribed inside the nucleocapsid. Initiation of reverse-transcription occurs first by binding the epsilon loop on the pgRNA genome, and is initiated by protein priming, thereby the 5'-end of (-)DNA is covalently linked to P protein. Partial (+)DNA is synthesized from the (-)DNA template and generates the relaxed circular DNA (RC-DNA) genome. After budding and infection, the RC-DNA migrates in the nucleus, and is converted into a plasmid-like covalently closed circular DNA (cccDNA). The activity of P protein does not seem to be necessary for cccDNA generation, and is presumably released from (+)DNA by host nuclear DNA repair machinery. The protein is Protein P of Hepatitis B virus genotype A2 subtype adw (isolate Japan/Nishioka/1983) (HBV-A).